A 492-amino-acid chain; its full sequence is 2,3-bisphosphoglycerate-independent phosphoglycerate mutase (492 aa).

Mn(2+) contacts are provided by D11 and S61. The active-site Phosphoserine intermediate is S61. Substrate is bound by residues H118, 147–148 (RD), R178, R184, 248–251 (RNDR), and K320. Residues D386, H390, D427, H428, and H445 each coordinate Mn(2+).

The protein belongs to the BPG-independent phosphoglycerate mutase family. As to quaternary structure, monomer. It depends on Mn(2+) as a cofactor.

The catalysed reaction is (2R)-2-phosphoglycerate = (2R)-3-phosphoglycerate. Its pathway is carbohydrate degradation; glycolysis; pyruvate from D-glyceraldehyde 3-phosphate: step 3/5. Catalyzes the interconversion of 2-phosphoglycerate and 3-phosphoglycerate. This Campylobacter jejuni subsp. jejuni serotype O:6 (strain 81116 / NCTC 11828) protein is 2,3-bisphosphoglycerate-independent phosphoglycerate mutase.